Reading from the N-terminus, the 517-residue chain is DNA-binding protein (517 aa).

Residues Met1–Ser10 show a composition bias toward polar residues. Positions Met1–Arg110 are disordered. A compositionally biased stretch (low complexity) spans Val64–Asn80. Over residues Pro87–His96 the composition is skewed to basic residues. Tyr180 carries the post-translational modification Phosphotyrosine; by host. 2 residues coordinate Zn(2+): Cys269 and His271. Positions Ile282–Leu316 are flexible loop. Zn(2+) is bound by residues Cys324, Cys340, Cys382, Cys384, Cys436, and Cys453. The tract at residues Val501–Phe517 is C-terminal arm, DBP binding.

Belongs to the adenoviridae E2A DNA-binding protein family. Homomultimerizes on viral ssDNA bound to pTP. Forms a initiation complex with viral polymerase, pTP and hosts NFIA and POU2F1/OCT1. Interacts with host SRCAP.

The protein localises to the host nucleus. In terms of biological role, plays a role in the elongation phase of viral strand displacement replication by unwinding the template in an ATP-independent fashion, employing its capacity to form multimers. Also enhances the rate of initiation. Released from template upon second strand synthesis. Assembles in complex with viral pTP, viral pol, host NFIA and host POU2F1/OCT1 on viral origin of replication. Covers the whole ssDNA genome during synthesis. The complementary strand synthesis induces its relese from DNA template. May inhibit cellular transcription mediated by the interaction between host SRCAP and CBP. This Human adenovirus B serotype 7 (HAdV-7) protein is DNA-binding protein.